Here is a 174-residue protein sequence, read N- to C-terminus: uncharacterized protein (174 aa).

The region spanning 42 to 174 (SSNKNINLYE…GVKGMFWYPR (133 aa)) is the N-acetyltransferase domain.

Belongs to the acetyltransferase family. Ycf52 subfamily.

Its subcellular location is the plastid. The protein localises to the chloroplast. This is an uncharacterized protein from Pyropia yezoensis (Susabi-nori).